Consider the following 82-residue polypeptide: MSDNIRTLQGRVLSNKMDKSITVAIERKVKHPLYGKFLKRTTKIHAHDEQNQCNAGDVVTIRECRPLSKTKSWTLVEVVSKA.

The protein belongs to the universal ribosomal protein uS17 family. In terms of assembly, part of the 30S ribosomal subunit.

Its function is as follows. One of the primary rRNA binding proteins, it binds specifically to the 5'-end of 16S ribosomal RNA. The polypeptide is Small ribosomal subunit protein uS17 (Shewanella piezotolerans (strain WP3 / JCM 13877)).